Here is a 1700-residue protein sequence, read N- to C-terminus: RNA replication protein (1700 aa).

Positions 299-462 constitute an Alphavirus-like MT domain; that stretch reads DPYAVRSHTH…VHEVKNSNWL (164 aa). The (+)RNA virus helicase ATP-binding domain occupies 842–991; it reads VLITSDEAGE…LFAPLSPFYL (150 aa). Residue 868 to 875 participates in ATP binding; the sequence is GAGGAGKT. Residues 992 to 1128 form the (+)RNA virus helicase C-terminal domain; sequence NWTWRMTRPV…LVREYELNQP (137 aa). Residues 1369 to 1480 form the RdRp catalytic domain; it reads GHATINDCEA…SVKPAFKELE (112 aa).

This sequence belongs to the potexvirus/carlavirus RNA replication protein family.

It catalyses the reaction RNA(n) + a ribonucleoside 5'-triphosphate = RNA(n+1) + diphosphate. The catalysed reaction is ATP + H2O = ADP + phosphate + H(+). Its function is as follows. RNA replication. The protein possibly functions as an ATP-binding helicase. This is RNA replication protein from Sclerotinia sclerotiorum (White mold).